The following is a 364-amino-acid chain: Phosrestin-2 (364 aa).

The protein belongs to the arrestin family. In terms of processing, phosphorylated, but does not undergo light-induced phosphorylation. Expressed specifically and abundantly in photoreceptor cells in retina and ocelli.

Its subcellular location is the cell projection. The protein resides in the rhabdomere. Its function is as follows. Regulates photoreceptor cell deactivation. Arr1 and Arr2 proteins are mediators of rhodopsin inactivation and are essential for the termination of the phototransduction cascade. Involved in regulating normal cycles of per nuclear accumulation in brain circadian neurons and thus is important for normal circadian behavior. In the dark, functions with Arr2 to promote the formation of cytosolic Bdbt foci, which are required for dco localization to photoreceptor nuclei where it phosphorylates and activates degradation of per. In Drosophila melanogaster (Fruit fly), this protein is Phosrestin-2 (Arr1).